We begin with the raw amino-acid sequence, 395 residues long: Na(+)/H(+) antiporter NhaA (395 aa).

11 helical membrane passes run Phe-11 to Ile-31, Leu-61 to Val-81, Ile-96 to Phe-116, Gly-127 to Gly-147, Leu-156 to Phe-176, Gly-179 to Met-199, Leu-215 to Phe-237, Val-262 to Val-282, Ile-295 to Val-315, Val-334 to Val-354, and Met-366 to Ala-386.

The protein belongs to the NhaA Na(+)/H(+) (TC 2.A.33) antiporter family.

The protein resides in the cell inner membrane. The catalysed reaction is Na(+)(in) + 2 H(+)(out) = Na(+)(out) + 2 H(+)(in). Its function is as follows. Na(+)/H(+) antiporter that extrudes sodium in exchange for external protons. The protein is Na(+)/H(+) antiporter NhaA of Pseudomonas fluorescens (strain Pf0-1).